The primary structure comprises 29 residues: Cyclotide mela-1 (29 aa).

The segment at residues 1–29 (GKYTCGETCFKGKCYTPGCTCSYPICKKD) is a cross-link (cyclopeptide (Gly-Asp)). Intrachain disulfides connect cysteine 5-cysteine 19, cysteine 9-cysteine 21, and cysteine 14-cysteine 26.

In terms of processing, this is a cyclic peptide. Contains 3 disulfide bonds.

Functionally, probably participates in a plant defense mechanism (Potential). Binds to and induces leakage in phospholipd membranes, particularly ones containing 1-palmitoyl-2-oleophosphatidylethanolamine (POPE). In vitro, displays cytotoxicity against cultured cells but no hemolytic activity towards fresh erythrocytes. Not active against Gram-negative bacterium E.coli ATCC 25922 or Gram-positive bacterium S.aureus ATCC 25923 up to a concentration of 64 uM. In Melicytus latifolius (Norfolk Island mahoe), this protein is Cyclotide mela-1.